The following is a 131-amino-acid chain: Arsenate reductase 2 (131 aa).

Residues cysteine 10, cysteine 82, and cysteine 89 each act as nucleophile in the active site. 2 cysteine pairs are disulfide-bonded: cysteine 10-cysteine 82 and cysteine 82-cysteine 89.

It belongs to the low molecular weight phosphotyrosine protein phosphatase family. Thioredoxin-coupled ArsC subfamily.

The protein localises to the cytoplasm. The catalysed reaction is arsenate + [thioredoxin]-dithiol + H(+) = arsenite + [thioredoxin]-disulfide + H2O. Catalyzes the reduction of arsenate [As(V)] to arsenite [As(III)]. The protein is Arsenate reductase 2 of Staphylococcus saprophyticus subsp. saprophyticus (strain ATCC 15305 / DSM 20229 / NCIMB 8711 / NCTC 7292 / S-41).